We begin with the raw amino-acid sequence, 229 residues long: Ribonuclease 3 (229 aa).

The RNase III domain maps to 3-125 (VNALQEKLGY…LIGGIFLDSN (123 aa)). Glu38 is a binding site for Mg(2+). Asp42 is an active-site residue. Asn111 and Glu114 together coordinate Mg(2+). Residue Glu114 is part of the active site. The DRBM domain maps to 155-225 (DPKTRLQEYM…AAKVLEALEH (71 aa)).

The protein belongs to the ribonuclease III family. In terms of assembly, homodimer. The cofactor is Mg(2+).

Its subcellular location is the cytoplasm. It carries out the reaction Endonucleolytic cleavage to 5'-phosphomonoester.. Digests double-stranded RNA. Involved in the processing of primary rRNA transcript to yield the immediate precursors to the large and small rRNAs (23S and 16S). Processes some mRNAs, and tRNAs when they are encoded in the rRNA operon. Processes pre-crRNA and tracrRNA of type II CRISPR loci if present in the organism. This Blochmanniella pennsylvanica (strain BPEN) protein is Ribonuclease 3.